Reading from the N-terminus, the 319-residue chain is ATP-dependent 6-phosphofructokinase (319 aa).

G11 is an ATP binding site. Position 21-25 (21-25 (RAVVR)) interacts with ADP. Residues 72 to 73 (RC) and 102 to 105 (GDGS) contribute to the ATP site. Mg(2+) is bound at residue D103. 125-127 (TID) contacts substrate. The Proton acceptor role is filled by D127. R154 serves as a coordination point for ADP. Substrate contacts are provided by residues R162 and 169–171 (MGR). ADP-binding positions include 185 to 187 (GAE), R211, and 213 to 215 (KRH). Substrate is bound by residues E222, R243, and 249 to 252 (HVQR).

Belongs to the phosphofructokinase type A (PFKA) family. ATP-dependent PFK group I subfamily. Prokaryotic clade 'B1' sub-subfamily. As to quaternary structure, homotetramer. The cofactor is Mg(2+).

The protein localises to the cytoplasm. It carries out the reaction beta-D-fructose 6-phosphate + ATP = beta-D-fructose 1,6-bisphosphate + ADP + H(+). The protein operates within carbohydrate degradation; glycolysis; D-glyceraldehyde 3-phosphate and glycerone phosphate from D-glucose: step 3/4. Allosterically activated by ADP and other diphosphonucleosides, and allosterically inhibited by phosphoenolpyruvate. In terms of biological role, catalyzes the phosphorylation of D-fructose 6-phosphate to fructose 1,6-bisphosphate by ATP, the first committing step of glycolysis. This is ATP-dependent 6-phosphofructokinase from Clostridioides difficile (strain 630) (Peptoclostridium difficile).